A 268-amino-acid chain; its full sequence is Nickel import ATP-binding protein NikE (268 aa).

An ABC transporter domain is found at 4–252 (LNVCGLSHHY…SSDAGRVLQN (249 aa)). Residue 45-52 (GRSGCGKS) participates in ATP binding.

It belongs to the ABC transporter superfamily. Nickel importer (TC 3.A.1.5.3) family. The complex is composed of two ATP-binding proteins (NikD and NikE), two transmembrane proteins (NikB and NikC) and a solute-binding protein (NikA).

The protein localises to the cell inner membrane. It catalyses the reaction Ni(2+)(out) + ATP + H2O = Ni(2+)(in) + ADP + phosphate + H(+). Functionally, part of the ABC transporter complex NikABCDE involved in nickel import. Responsible for energy coupling to the transport system. In Shigella flexneri, this protein is Nickel import ATP-binding protein NikE.